We begin with the raw amino-acid sequence, 158 residues long: MGRSISVSFGLLAVFLSLSGTGAGLDCPPDSSPYRYFCYRVFKEQKNWADAERFCAERPNNGHLVSIESMEEAEFVAQLLSKITGKFITHFWIGLRIEDKKQQCRSEWSDGSSVSYDNLLKREFRKCFGLEKGTGYRSWFNLNCEEPYPFVCKVPPNC.

Positions 1 to 23 (MGRSISVSFGLLAVFLSLSGTGA) are cleaved as a signal peptide. Disulfide bonds link Cys27-Cys38, Cys55-Cys152, and Cys127-Cys144. One can recognise a C-type lectin domain in the interval 34–153 (YRYFCYRVFK…CEEPYPFVCK (120 aa)).

It belongs to the snaclec family. In terms of assembly, heterotrimer; disulfide-linked. The heterotrimer consists of 1 heavy chain (a metalloproteinase) and 2 light chains: LC1 and LC2. As to expression, expressed by the venom gland.

The protein resides in the secreted. In terms of biological role, regulatory subunit of the blood coagulation factor X-activating enzyme. Activates coagulation factor X (F10) by cleaving the Arg-Ile bond at position 234, activates coagulation factor IX (F9) by cleaving the Arg-Val bond at position 226 and is also able to activate protein C (PROC). May serve as an exosite by which the enzyme recognizes and binds to the Gla domain of factor X (F10) in a calcium-dependent manner. In Macrovipera lebetinus (Levantine viper), this protein is Snaclec coagulation factor X-activating enzyme light chain 2 (LC2).